The primary structure comprises 276 residues: uncharacterized protein (276 aa).

This is an uncharacterized protein from Fowl adenovirus A serotype 1 (strain CELO / Phelps) (FAdV-1).